A 418-amino-acid chain; its full sequence is Nickel and cobalt resistance protein CnrC (418 aa).

Residues 1–29 form the signal peptide; that stretch reads MKQVISSFLCRPRFVGSAIWLLPVALSHA.

Belongs to the outer membrane factor (OMF) (TC 1.B.17) family.

In terms of biological role, the products of the genes cnrA, cnrB, and cnrC are likely to form a membrane-bound protein complex catalyzing an energy-dependent efflux of Ni(2+) and Co(2+). The mechanism of action of the CnrCBA complex may be that of a proton/cation antiporter. The sequence is that of Nickel and cobalt resistance protein CnrC (cnrC) from Cupriavidus metallidurans (strain ATCC 43123 / DSM 2839 / NBRC 102507 / CH34) (Ralstonia metallidurans).